Reading from the N-terminus, the 505-residue chain is Nostrin (505 aa).

The F-BAR domain occupies 1 to 260 (MRDPLTDCSY…AISKIDIEKD (260 aa)). Coiled coils occupy residues 101 to 128 (AHQVLSAHEKKRKSLENEVEKTANLVIS), 160 to 222 (ITTE…RIQL), and 295 to 332 (KERQTSSIKSKLLRLQKDIEKASRDQEGLERMLRAYSS). A Phosphoserine modification is found at serine 114. The 81-residue stretch at 292–372 (AMSKERQTSS…SYKLSSVLAE (81 aa)) folds into the REM-1 domain. An SH3 domain is found at 437–496 (LGNGLCKALYPFQARQDDELDLEKGDIVTIHKKKDEGWWFGSLKGKKGHFPAAYVEELPL). Position 478 is a phosphoserine (serine 478).

Homotrimer. Interacts with DAB2. Interacts with NOS3, DNM2, WASL and CAV1. Interacts (via SH3 domain) with DNM2; this interaction allows the recruitment of NOS3 to dynamin-positive structures. In terms of tissue distribution, present in pulmonary arterial endothelial cells (at protein level).

The protein resides in the cell membrane. The protein localises to the cytoplasmic vesicle. Its subcellular location is the cytoplasm. It is found in the cytoskeleton. In terms of biological role, multivalent adapter protein which may decrease NOS3 activity by inducing its translocation away from the plasma membrane. The protein is Nostrin of Bos taurus (Bovine).